Consider the following 391-residue polypeptide: Formate-dependent phosphoribosylglycinamide formyltransferase (391 aa).

N(1)-(5-phospho-beta-D-ribosyl)glycinamide contacts are provided by residues 20-21 (EL) and Glu-80. ATP contacts are provided by residues Arg-112, Lys-153, 158–163 (SSGKGQ), 193–196 (EGFV), and Glu-201. Positions 117-306 (RLAAETLGLP…EFALHVRAIL (190 aa)) constitute an ATP-grasp domain. 2 residues coordinate Mg(2+): Glu-265 and Glu-277. Residues Asp-284, Lys-354, and 361–362 (RR) each bind N(1)-(5-phospho-beta-D-ribosyl)glycinamide.

The protein belongs to the PurK/PurT family. In terms of assembly, homodimer.

The catalysed reaction is N(1)-(5-phospho-beta-D-ribosyl)glycinamide + formate + ATP = N(2)-formyl-N(1)-(5-phospho-beta-D-ribosyl)glycinamide + ADP + phosphate + H(+). It participates in purine metabolism; IMP biosynthesis via de novo pathway; N(2)-formyl-N(1)-(5-phospho-D-ribosyl)glycinamide from N(1)-(5-phospho-D-ribosyl)glycinamide (formate route): step 1/1. Its function is as follows. Involved in the de novo purine biosynthesis. Catalyzes the transfer of formate to 5-phospho-ribosyl-glycinamide (GAR), producing 5-phospho-ribosyl-N-formylglycinamide (FGAR). Formate is provided by PurU via hydrolysis of 10-formyl-tetrahydrofolate. The protein is Formate-dependent phosphoribosylglycinamide formyltransferase of Shewanella putrefaciens (strain CN-32 / ATCC BAA-453).